The primary structure comprises 750 residues: Ribosomal RNA large subunit methyltransferase K/L (750 aa).

Residues 46–157 (TAYRLCLWSR…RGEAILSLDL (112 aa)) form the THUMP domain.

Belongs to the methyltransferase superfamily. RlmKL family.

The protein localises to the cytoplasm. It carries out the reaction guanosine(2445) in 23S rRNA + S-adenosyl-L-methionine = N(2)-methylguanosine(2445) in 23S rRNA + S-adenosyl-L-homocysteine + H(+). The catalysed reaction is guanosine(2069) in 23S rRNA + S-adenosyl-L-methionine = N(2)-methylguanosine(2069) in 23S rRNA + S-adenosyl-L-homocysteine + H(+). Functionally, specifically methylates the guanine in position 2445 (m2G2445) and the guanine in position 2069 (m7G2069) of 23S rRNA. The sequence is that of Ribosomal RNA large subunit methyltransferase K/L from Pseudomonas syringae pv. syringae (strain B728a).